A 1354-amino-acid polypeptide reads, in one-letter code: RNA-directed RNA polymerase VP1 (1354 aa).

It catalyses the reaction RNA(n) + a ribonucleoside 5'-triphosphate = RNA(n+1) + diphosphate. RNA-directed RNA polymerase that is involved in transcription and genome replication. Following infection, it catalyzes the synthesis of fully conservative plus strands. After core assembly, which consists in recruitment of one capped plus-strand for each genomic segments and polymerase complexes, the polymerase switches mode and catalyzes the synthesis of complementary minus-strands. This is RNA-directed RNA polymerase VP1 from Cryphonectria parasitica mycoreovirus 1 (strain 9B21) (CpMYRV-1).